Consider the following 284-residue polypeptide: Ribosomal RNA small subunit methyltransferase A (284 aa).

6 residues coordinate S-adenosyl-L-methionine: asparagine 27, leucine 29, glycine 54, glutamate 75, aspartate 100, and asparagine 125.

The protein belongs to the class I-like SAM-binding methyltransferase superfamily. rRNA adenine N(6)-methyltransferase family. RsmA subfamily.

It localises to the cytoplasm. It catalyses the reaction adenosine(1518)/adenosine(1519) in 16S rRNA + 4 S-adenosyl-L-methionine = N(6)-dimethyladenosine(1518)/N(6)-dimethyladenosine(1519) in 16S rRNA + 4 S-adenosyl-L-homocysteine + 4 H(+). Functionally, specifically dimethylates two adjacent adenosines (A1518 and A1519) in the loop of a conserved hairpin near the 3'-end of 16S rRNA in the 30S particle. May play a critical role in biogenesis of 30S subunits. The protein is Ribosomal RNA small subunit methyltransferase A of Protochlamydia amoebophila (strain UWE25).